The sequence spans 293 residues: tRNA (guanine(9)-N1)-methyltransferase (293 aa).

Residues 1–31 (MSNDEINQNEEKVKRTPPLPPVPEGMSKKQW) form a disordered region. Thr16 carries the phosphothreonine modification. The stretch at 32–61 (KKMCKRQRWEENKAKYNAERRVKKKRLRHE) forms a coiled coil. The 197-residue stretch at 83–279 (EPRINVNQTD…SVLPPRKLDA (197 aa)) folds into the SAM-dependent MTase TRM10-type domain. Residues 186–187 (LT), Gly206, 210–214 (DKNRY), Cys218, Leu232, and 244–246 (RVL) contribute to the S-adenosyl-L-methionine site. Asp210 functions as the Proton acceptor in the catalytic mechanism. Ser283 bears the Phosphoserine mark.

This sequence belongs to the class IV-like SAM-binding methyltransferase superfamily. TRM10 family. In terms of assembly, monomer.

The protein localises to the cytoplasm. The protein resides in the nucleus. It carries out the reaction guanosine(9) in tRNA + S-adenosyl-L-methionine = N(1)-methylguanosine(9) in tRNA + S-adenosyl-L-homocysteine + H(+). Functionally, S-adenosyl-L-methionine-dependent guanine N(1)-methyltransferase that catalyzes the formation of N(1)-methylguanine at position 9 (m1G9) in cytoplasmic tRNAs. The sequence is that of tRNA (guanine(9)-N1)-methyltransferase from Saccharomyces cerevisiae (strain ATCC 204508 / S288c) (Baker's yeast).